We begin with the raw amino-acid sequence, 227 residues long: Terpene cyclase ltmB (227 aa).

Transmembrane regions (helical) follow at residues 20 to 40 (LAETFVTFMGLGWLINYVLMI), 51 to 71 (MALIPLCNNIAWELVYTIIYP), 76 to 96 (VELAAFIAGVTLNFLIMTSAA), 113 to 133 (AGLIIVAGILMCFTGHVALAM), 135 to 155 (IGPALAYSWGAVICQLALSIG), 173 to 195 (LWSSRFLGSCCAVGFAFLRWRYW), and 206 to 226 (LILWSLATFLVADLTYGVCLL).

The protein belongs to the paxB family.

The protein resides in the membrane. Its pathway is secondary metabolite biosynthesis. Terpene cyclase; part of the gene cluster that mediates the biosynthesis of lolitrems, indole-diterpene mycotoxins that are potent tremorgens in mammals, and are synthesized by clavicipitaceous fungal endophytes in association with their grass hosts. The geranylgeranyl diphosphate (GGPP) synthase ltmG is proposed to catalyze the first step in lolitrem biosynthesis. LtmG catalyzes a series of iterative condensations of isopentenyl diphosphate (IPP) with dimethylallyl diphosphate (DMAPP), geranyl diphosphate (GPP), and farnesyl diphosphate (FPP), to form GGPP. GGPP then condenses with indole-3-glycerol phosphate to form 3-geranylgeranylindole, an acyclic intermediate, to be incorporated into paxilline. Either ltmG or ltmC could be responsible for this step, as both are putative prenyl transferases. The FAD-dependent monooxygenase ltmM then catalyzes the epoxidation of the two terminal alkenes of the geranylgeranyl moiety, which is subsequently cyclized by ltmB, to paspaline. The cytochrome P450 monooxygenases ltmQ and ltmP can sequentially oxidize paspaline to terpendole E and terpendole F. Alternatively, ltmP converts paspaline to an intermediate which is oxidized by ltmQ to terpendole F. LtmF, ltmK, ltmE and ltmJ appear to be unique to the epichloe endophytes. The prenyltransferase ltmF is involved in the 27-hydroxyl-O-prenylation. The cytochrome P450 monooxygenase ltmK is required for the oxidative acetal ring formation. The multi-functional prenyltransferase ltmE is required for C20- and C21-prenylations of the indole ring of paspalanes and acts together with the cytochrome P450 monooxygenase ltmJ to yield lolitremanes by multiple oxidations and ring closures. The stereoisomer pairs of lolitriol and lolitrem N or lolitrem B and lolitrem F may be attributed to variations in the way in which ring closure can occur under the action of ltmJ. While the major product of this pathway is lolitrem B, the prenyl transferases and cytochrome P450 monooxygenases identified in this pathway have a remarkable versatility in their regio- and stereo-specificities to generate a diverse range of metabolites that are products of a metabolic grid rather than a linear pathway. The protein is Terpene cyclase ltmB of Epichloe festucae var. lolii (Neotyphodium lolii).